An 828-amino-acid polypeptide reads, in one-letter code: Leucine--tRNA ligase (828 aa).

Positions 36-46 (PYPSGKIHIGH) match the 'HIGH' region motif. Positions 595–599 (KMSKS) match the 'KMSKS' region motif. Lysine 598 lines the ATP pocket.

This sequence belongs to the class-I aminoacyl-tRNA synthetase family.

It localises to the cytoplasm. It carries out the reaction tRNA(Leu) + L-leucine + ATP = L-leucyl-tRNA(Leu) + AMP + diphosphate. This chain is Leucine--tRNA ligase, found in Rickettsia prowazekii (strain Madrid E).